Here is a 478-residue protein sequence, read N- to C-terminus: Lysine-rich nucleolar protein 1 (478 aa).

A disordered region spans residues 1–231 (MVSKTQKADL…THQEGDILLV (231 aa)). Lys7 participates in a covalent cross-link: Glycyl lysine isopeptide (Lys-Gly) (interchain with G-Cter in SUMO2). Positions 17-27 (KKKKKKKKKRV) are enriched in basic residues. Polar residues predominate over residues 33 to 45 (EPETQYSVLNSND). Ser51 and Ser59 each carry phosphoserine. Polar residues predominate over residues 54–63 (RATSPSNNVD). Composition is skewed to basic residues over residues 73-82 (SKRKKKKKSC) and 120-129 (EKKKKRRKSL). Lys140 is covalently cross-linked (Glycyl lysine isopeptide (Lys-Gly) (interchain with G-Cter in SUMO2)). The residue at position 142 (Ser142) is a Phosphoserine. The span at 143 to 153 (PDPKHAKEVSK) shows a compositional bias: basic and acidic residues. Composition is skewed to basic residues over residues 154–165 (AGRKSKKQRKEK) and 204–222 (QKRKQGSPRDHNMKKKKKT). Residue Lys250 forms a Glycyl lysine isopeptide (Lys-Gly) (interchain with G-Cter in SUMO1); alternate linkage. Lys250 is covalently cross-linked (Glycyl lysine isopeptide (Lys-Gly) (interchain with G-Cter in SUMO2); alternate). The tract at residues 258 to 314 (PIDSPKAPGKKKVKSKKKVEQPVGEGLAVKRKKKKKKRKENGVKEDPWQEEKEESDT) is disordered. Ser261 is modified (phosphoserine). Over residues 265 to 274 (PGKKKVKSKK) the composition is skewed to basic residues. Residues Lys275 and Lys287 each participate in a glycyl lysine isopeptide (Lys-Gly) (interchain with G-Cter in SUMO2) cross-link. The segment covering 286 to 296 (VKRKKKKKKRK) has biased composition (basic residues). The span at 297 to 307 (ENGVKEDPWQE) shows a compositional bias: basic and acidic residues. Lys309 is covalently cross-linked (Glycyl lysine isopeptide (Lys-Gly) (interchain with G-Cter in SUMO2)). An interaction with ZNF106 region spans residues 310–478 (EESDTDLEVV…NASKSIKLQD (169 aa)). Ser312 carries the phosphoserine modification. Phosphothreonine is present on Thr314. Lys323 participates in a covalent cross-link: Glycyl lysine isopeptide (Lys-Gly) (interchain with G-Cter in SUMO2). Positions 340–357 (QEEIDRESGKTEASEPKK) are enriched in basic and acidic residues. Residues 340-378 (QEEIDRESGKTEASEPKKWTVGLSVKTEASEPKKWTGTQ) form a disordered region. Glycyl lysine isopeptide (Lys-Gly) (interchain with G-Cter in SUMO2) cross-links involve residues Lys373, Lys393, Lys395, Lys427, and Lys462.

As to quaternary structure, interacts with ZNF106. As to expression, expressed in testis.

The protein resides in the nucleus. The protein localises to the nucleolus. This chain is Lysine-rich nucleolar protein 1 (Knop1), found in Mus musculus (Mouse).